The primary structure comprises 512 residues: Kelch repeat protein C2 (512 aa).

A BTB domain is found at 2 to 67 (ESVIFSINGE…MRWKKINITI (66 aa)). Kelch repeat units follow at residues 216-261 (IKHN…LHNC), 262-307 (LYII…VNDG), 309-354 (LYVI…FVND), 356-403 (IYVM…EYDG), 405-449 (IYVI…SCGD), and 452-498 (LIIA…THKS).

This sequence belongs to the poxviruses Kelch family.

This chain is Kelch repeat protein C2, found in Vaccinia virus (strain Copenhagen) (VACV).